The primary structure comprises 327 residues: Metaxin-1 homolog (327 aa).

A helical membrane pass occupies residues 281 to 301; the sequence is IVAGVGAVLAMGAFAAWRGIY.

This sequence belongs to the metaxin family. Associates with the mitochondrial contact site and cristae organizing system (MICOS) complex (also known as MINOS or MitOS complex).

Its subcellular location is the mitochondrion outer membrane. Its function is as follows. Involved in transport of proteins into the mitochondrion. Essential for embryonic development. The chain is Metaxin-1 homolog from Drosophila melanogaster (Fruit fly).